Here is a 176-residue protein sequence, read N- to C-terminus: Macro domain-containing protein lmo2759 (176 aa).

The 175-residue stretch at 1–175 folds into the Macro domain; that stretch reads MEITIVKGDI…LYNKLINSEV (175 aa).

It belongs to the MacroD-type family.

This is Macro domain-containing protein lmo2759 from Listeria monocytogenes serovar 1/2a (strain ATCC BAA-679 / EGD-e).